Reading from the N-terminus, the 123-residue chain is Proteasome assembly chaperone 4 (123 aa).

Belongs to the PSMG4 family. Interacts with PSMG3. Associates with alpha subunits of the 20S proteasome.

Functionally, chaperone protein which promotes assembly of the 20S proteasome. The chain is Proteasome assembly chaperone 4 from Homo sapiens (Human).